Consider the following 235-residue polypeptide: Purine nucleoside phosphorylase DeoD-type (235 aa).

An a purine D-ribonucleoside-binding site is contributed by histidine 4. Residues glycine 20, arginine 24, arginine 43, and arginine 87 to threonine 90 each bind phosphate. A purine D-ribonucleoside contacts are provided by residues glutamate 179 to glutamate 181 and serine 203 to aspartate 204. Aspartate 204 acts as the Proton donor in catalysis.

This sequence belongs to the PNP/UDP phosphorylase family. Homohexamer; trimer of homodimers.

The enzyme catalyses a purine D-ribonucleoside + phosphate = a purine nucleobase + alpha-D-ribose 1-phosphate. It catalyses the reaction a purine 2'-deoxy-D-ribonucleoside + phosphate = a purine nucleobase + 2-deoxy-alpha-D-ribose 1-phosphate. In terms of biological role, catalyzes the reversible phosphorolytic breakdown of the N-glycosidic bond in the beta-(deoxy)ribonucleoside molecules, with the formation of the corresponding free purine bases and pentose-1-phosphate. In Exiguobacterium sibiricum (strain DSM 17290 / CCUG 55495 / CIP 109462 / JCM 13490 / 255-15), this protein is Purine nucleoside phosphorylase DeoD-type.